Here is a 434-residue protein sequence, read N- to C-terminus: MFLDTAKIKVKAGNGGDGMVAFRREKYVPNGGPWGGDGGRGGNVVFVVDEGLRTLMDFRYNRHFKADSGEKGMTKGMHGRGAEDLRVRVPQGTTVRDAETGKVLTDLIEHGQEFIVAHGGRGGRGNIRFATPKNPAPEISENGEPGQERELQLELKILADVGLVGFPSVGKSTLLSVITSAKPKIGAYHFTTIVPNLGMVRTQSGESFAVADLPGLIEGASQGVGLGTQFLRHIERTRVILHIIDMSASEGRDPYEDYLAINKELESYNLRLMERPQIIVANKMDMPESQENLEEFKKKLSENYDEFEELPAIFPISGLTKQGLATLLDATAELLDKTPEFLLYDESDMEEEAYYGFDEEEKAFEISRDDDATWVLSGEKLMKLFNMTNFDRDESVMKFARQLRGMGVDEALRARGAKDGDLVRIGKFEFEFVD.

Residues 1–158 form the Obg domain; sequence MFLDTAKIKV…RELQLELKIL (158 aa). An OBG-type G domain is found at 159-336; that stretch reads ADVGLVGFPS…LLDATAELLD (178 aa). GTP contacts are provided by residues 165–172, 190–194, 212–215, 282–285, and 317–319; these read GFPSVGKS, FTTIV, DLPG, NKMD, and SGL. 2 residues coordinate Mg(2+): serine 172 and threonine 192. The OCT domain occupies 356-434; it reads GFDEEEKAFE…IGKFEFEFVD (79 aa).

It belongs to the TRAFAC class OBG-HflX-like GTPase superfamily. OBG GTPase family. As to quaternary structure, monomer. Requires Mg(2+) as cofactor.

It localises to the cytoplasm. An essential GTPase which binds GTP, GDP and possibly (p)ppGpp with moderate affinity, with high nucleotide exchange rates and a fairly low GTP hydrolysis rate. Plays a role in control of the cell cycle, stress response, ribosome biogenesis and in those bacteria that undergo differentiation, in morphogenesis control. The protein is GTPase Obg of Streptococcus pneumoniae (strain ATCC 700669 / Spain 23F-1).